The sequence spans 200 residues: Endochitinase (200 aa).

Glu-58 (proton donor) is an active-site residue.

This sequence belongs to the glycosyl hydrolase 19 family. Chitinase class I subfamily.

The enzyme catalyses Random endo-hydrolysis of N-acetyl-beta-D-glucosaminide (1-&gt;4)-beta-linkages in chitin and chitodextrins.. In terms of biological role, this protein functions as a defense against chitin-containing fungal pathogens. The chain is Endochitinase from Avena sativa (Oat).